The primary structure comprises 150 residues: Ribonuclease H (150 aa).

The 142-residue stretch at 1–142 (MSDSVELFTD…ADQLANRGVD (142 aa)) folds into the RNase H type-1 domain. Positions 10, 48, 70, and 134 each coordinate Mg(2+).

This sequence belongs to the RNase H family. As to quaternary structure, monomer. Mg(2+) serves as cofactor.

The protein localises to the cytoplasm. It carries out the reaction Endonucleolytic cleavage to 5'-phosphomonoester.. Functionally, endonuclease that specifically degrades the RNA of RNA-DNA hybrids. The protein is Ribonuclease H of Pseudomonas syringae pv. syringae (strain B728a).